Consider the following 648-residue polypeptide: Threonine--tRNA ligase (648 aa).

Residues Met1–Thr61 enclose the TGS domain. The segment at Asp240–Pro539 is catalytic. Cys335, His386, and His516 together coordinate Zn(2+).

Belongs to the class-II aminoacyl-tRNA synthetase family. As to quaternary structure, homodimer. It depends on Zn(2+) as a cofactor.

It localises to the cytoplasm. The enzyme catalyses tRNA(Thr) + L-threonine + ATP = L-threonyl-tRNA(Thr) + AMP + diphosphate + H(+). Functionally, catalyzes the attachment of threonine to tRNA(Thr) in a two-step reaction: L-threonine is first activated by ATP to form Thr-AMP and then transferred to the acceptor end of tRNA(Thr). Also edits incorrectly charged L-seryl-tRNA(Thr). This is Threonine--tRNA ligase from Flavobacterium psychrophilum (strain ATCC 49511 / DSM 21280 / CIP 103535 / JIP02/86).